The sequence spans 642 residues: MNDITVTLPDGSELSVPADATVEDVAYEIGPGLGRDTIAGVVDGELVDATTSVYNDARVVIVTEQSDEYQRVLRHSAAHVFAQALQREYPDAKLTIGPPTDDGFYYDIASVDLDENDLETIETEMEAIIDADIPITQQYQSREEAFSKYENNPYKCDILETEAADEDPVSFYIQDDFEDLCQGPHVDSTGEIGAITLLNISSAYWRGDEDNDTLTRVYGAAFESESELESFLERRKKAKERDHRKIGQELDLFSIPDITGPGLPLYHPDGKKILNELSSFARSLNLEAGYEPVETPHLFRTELWKQSGHYENYVDDMFLLDVSDEEYGLKPMNCPGHATIFDQHSWSYRDLPVRYFEDGKVYRKEQRGELSGLSRVWSFTIDDGHLFCQPEQIEQEVTHVMDAIYSVLDTFGLEAHVALATRPEKSVGGDEIWENAETQLRSVLESQNIDYDLEPGDGAFYGPKIDFAFEDALGRQWDGPTVQLDFNMPDRFELTYTGEDNTDHQPVMIHRALYGSYERFFMVLIEHFNGKFPLWLAPDQVRILPISDDQLGYAHRIKNELSDFRVSIEDRAWTLGRKIRAAQEERVPYMIIIGDDEVSTETISVRDRKEREKQDVDLSTFHSHLKSEYENKRLEPDFIDMN.

Residues 1–63 (MNDITVTLPD…YNDARVVIVT (63 aa)) form the TGS domain. The segment at 242–533 (DHRKIGQELD…LIEHFNGKFP (292 aa)) is catalytic. Residues Cys-334, His-385, and His-510 each contribute to the Zn(2+) site.

This sequence belongs to the class-II aminoacyl-tRNA synthetase family. Homodimer. Zn(2+) is required as a cofactor.

The protein resides in the cytoplasm. It carries out the reaction tRNA(Thr) + L-threonine + ATP = L-threonyl-tRNA(Thr) + AMP + diphosphate + H(+). Catalyzes the attachment of threonine to tRNA(Thr) in a two-step reaction: L-threonine is first activated by ATP to form Thr-AMP and then transferred to the acceptor end of tRNA(Thr). The polypeptide is Threonine--tRNA ligase (Haloquadratum walsbyi (strain DSM 16790 / HBSQ001)).